We begin with the raw amino-acid sequence, 223 residues long: DNA mismatch repair protein MutH (223 aa).

It belongs to the MutH family.

The protein localises to the cytoplasm. Functionally, sequence-specific endonuclease that cleaves unmethylated GATC sequences. It is involved in DNA mismatch repair. This is DNA mismatch repair protein MutH from Shewanella sp. (strain MR-7).